A 611-amino-acid polypeptide reads, in one-letter code: E-selectin (611 aa).

An N-terminal signal peptide occupies residues 1–22; the sequence is MITSQLLPALTLVLLLFKEGGA. Residues 23-140 enclose the C-type lectin domain; that stretch reads WSYNASTEAM…CDKKKLALCY (118 aa). Topologically, residues 23-557 are extracellular; it reads WSYNASTEAM…CEAPTESSIP (535 aa). N-linked (GlcNAc...) asparagine glycosylation is present at Asn-26. 19 disulfides stabilise this stretch: Cys-41–Cys-139, Cys-112–Cys-131, Cys-144–Cys-155, Cys-149–Cys-164, Cys-166–Cys-175, Cys-181–Cys-225, Cys-194–Cys-207, Cys-211–Cys-238, Cys-243–Cys-287, Cys-256–Cys-269, Cys-273–Cys-300, Cys-305–Cys-350, Cys-336–Cys-363, Cys-368–Cys-413, Cys-399–Cys-426, Cys-431–Cys-476, Cys-462–Cys-489, Cys-494–Cys-535, and Cys-521–Cys-548. Ca(2+) contacts are provided by Glu-102, Asn-104, and Glu-110. A carbohydrate-binding positions include 102–110, 114–119, and 127–129; these read EPNNKQNDE, EIYIKR, and NDE. Ca(2+)-binding residues include Asn-127 and Asp-128. An EGF-like domain is found at 141–176; it reads TAACTPTSCSGHGECVETVNNYTCKCHPGFRGLRCE. Residue Asn-161 is glycosylated (N-linked (GlcNAc...) asparagine). 2 consecutive Sushi domains span residues 179–240 and 241–302; these read VTCQ…ACNV and VECS…TCKA. Asn-204 is a glycosylation site (N-linked (GlcNAc...) asparagine). N-linked (GlcNAc...) asparagine glycosylation occurs at Asn-266. 2 N-linked (GlcNAc...) asparagine glycosylation sites follow: Asn-313 and Asn-333. Sushi domains are found at residues 316-365, 367-428, 430-491, and 492-550; these read VSCS…VCKA, QCKA…TCEA, KCDA…SCQV, and VQCF…TCEA. The N-linked (GlcNAc...) asparagine glycan is linked to Asn-528. Residues 558 to 579 traverse the membrane as a helical segment; it reads LAVGLTAGGTSLLTVASFLLWL. At 580–611 the chain is on the cytoplasmic side; sequence LKRLRKRAKKFVPASSCQSLQSDGSYHMPCSI.

This sequence belongs to the selectin/LECAM family. Interacts with SELPLG/PSGL1 and PODXL2 through the sialyl Lewis X epitope. SELPLG sulfation appears not to be required for this interaction.

It localises to the cell membrane. Functionally, cell-surface glycoprotein having a role in immunoadhesion. Mediates in the adhesion of blood neutrophils in cytokine-activated endothelium through interaction with SELPLG/PSGL1. May have a role in capillary morphogenesis. The sequence is that of E-selectin (SELE) from Canis lupus familiaris (Dog).